A 151-amino-acid polypeptide reads, in one-letter code: MLSEQQYRYIVRILGTDIPGDLKVPYGLALVKGIGVNLAYALCRLLGIDPNKRIGFLTDAEIEKIEKAMANPLAIGIPVWMLNRRKDYETGKDLHLVGADLIYYVKRDIEREKRIRSWRGIRHALGLKVRGQRTATTGRIGMTIGVRKGKK.

The protein belongs to the universal ribosomal protein uS13 family. In terms of assembly, part of the 30S ribosomal subunit. Forms a loose heterodimer with protein S19. Forms two bridges to the 50S subunit in the 70S ribosome.

Located at the top of the head of the 30S subunit, it contacts several helices of the 16S rRNA. In the 70S ribosome it contacts the 23S rRNA (bridge B1a) and protein L5 of the 50S subunit (bridge B1b), connecting the 2 subunits; these bridges are implicated in subunit movement. The chain is Small ribosomal subunit protein uS13 from Hyperthermus butylicus (strain DSM 5456 / JCM 9403 / PLM1-5).